The following is a 714-amino-acid chain: Fatty acid oxidation complex subunit alpha (714 aa).

The interval 1-190 (MEMASAFTLN…KLGLVDDVVP (190 aa)) is enoyl-CoA hydratase. Positions 306–714 (APLNSVGILG…FWKTTATDLQ (409 aa)) are 3-hydroxyacyl-CoA dehydrogenase.

In the N-terminal section; belongs to the enoyl-CoA hydratase/isomerase family. It in the central section; belongs to the 3-hydroxyacyl-CoA dehydrogenase family. Heterotetramer of two alpha chains (FadJ) and two beta chains (FadI).

It is found in the cytoplasm. The catalysed reaction is a (3S)-3-hydroxyacyl-CoA = a (2E)-enoyl-CoA + H2O. The enzyme catalyses a 4-saturated-(3S)-3-hydroxyacyl-CoA = a (3E)-enoyl-CoA + H2O. It carries out the reaction a (3S)-3-hydroxyacyl-CoA + NAD(+) = a 3-oxoacyl-CoA + NADH + H(+). It catalyses the reaction (3S)-3-hydroxybutanoyl-CoA = (3R)-3-hydroxybutanoyl-CoA. It functions in the pathway lipid metabolism; fatty acid beta-oxidation. Catalyzes the formation of a hydroxyacyl-CoA by addition of water on enoyl-CoA. Also exhibits 3-hydroxyacyl-CoA epimerase and 3-hydroxyacyl-CoA dehydrogenase activities. The protein is Fatty acid oxidation complex subunit alpha of Escherichia coli O7:K1 (strain IAI39 / ExPEC).